The sequence spans 289 residues: ATP synthase gamma chain (289 aa).

It belongs to the ATPase gamma chain family. F-type ATPases have 2 components, CF(1) - the catalytic core - and CF(0) - the membrane proton channel. CF(1) has five subunits: alpha(3), beta(3), gamma(1), delta(1), epsilon(1). CF(0) has three main subunits: a, b and c.

The protein localises to the cell inner membrane. In terms of biological role, produces ATP from ADP in the presence of a proton gradient across the membrane. The gamma chain is believed to be important in regulating ATPase activity and the flow of protons through the CF(0) complex. The sequence is that of ATP synthase gamma chain from Cereibacter sphaeroides (strain ATCC 17029 / ATH 2.4.9) (Rhodobacter sphaeroides).